A 255-amino-acid chain; its full sequence is NAD kinase (255 aa).

Asp-44 (proton acceptor) is an active-site residue. Residues 44 to 45 (DG), 114 to 115 (NE), Asp-144, Ala-152, and 155 to 160 (TAYNLS) contribute to the NAD(+) site.

Belongs to the NAD kinase family. The cofactor is a divalent metal cation.

The protein resides in the cytoplasm. The catalysed reaction is NAD(+) + ATP = ADP + NADP(+) + H(+). Involved in the regulation of the intracellular balance of NAD and NADP, and is a key enzyme in the biosynthesis of NADP. Catalyzes specifically the phosphorylation on 2'-hydroxyl of the adenosine moiety of NAD to yield NADP. The polypeptide is NAD kinase (Hyphomonas neptunium (strain ATCC 15444)).